We begin with the raw amino-acid sequence, 198 residues long: Glycerol-3-phosphate acyltransferase (198 aa).

5 helical membrane-spanning segments follow: residues 6-26 (MLPV…GLIL), 56-78 (LAAA…AGYL), 83-101 (AAML…PVWL), 113-133 (IGIL…VWLA), and 154-174 (IVLW…LTLL).

It belongs to the PlsY family. As to quaternary structure, probably interacts with PlsX.

The protein localises to the cell inner membrane. The catalysed reaction is an acyl phosphate + sn-glycerol 3-phosphate = a 1-acyl-sn-glycero-3-phosphate + phosphate. Its pathway is lipid metabolism; phospholipid metabolism. Its function is as follows. Catalyzes the transfer of an acyl group from acyl-phosphate (acyl-PO(4)) to glycerol-3-phosphate (G3P) to form lysophosphatidic acid (LPA). This enzyme utilizes acyl-phosphate as fatty acyl donor, but not acyl-CoA or acyl-ACP. The chain is Glycerol-3-phosphate acyltransferase from Bradyrhizobium sp. (strain ORS 278).